A 530-amino-acid chain; its full sequence is MRRLWGAARKPSGAGWEKEWAEAPQEAPGAWSGRLGPGRSGRKGRAVPGWASWPAHLALAARPARHLGGAGQGPRPLHSGTAPFHSRASGERQRRLEPQLQHESRCRSSTPADAWRAEAALPVRAMGAPWGSPTAAAGGRRGWRRGRGLPWTVCVLAAAGLTCTALITYACWGQLPPLPWASPTPSRPVGVLLWWEPFGGRDSAPRPPPDCRLRFNISGCRLLTDRASYGEAQAVLFHHRDLVKGPPDWPPPWGIQAHTAEEVDLRVLDYEEAAAAAEALATSSPRPPGQRWVWMNFESPSHSPGLRSLASNLFNWTLSYRADSDVFVPYGYLYPRSHPGDPPSGLAPPLSRKQGLVAWVVSHWDERQARVRYYHQLSQHVTVDVFGRGGPGQPVPEIGLLHTVARYKFYLAFENSQHLDYITEKLWRNALLAGAVPVVLGPDRANYERFVPRGAFIHVDDFPSASSLASYLLFLDRNPAVYRRYFHWRRSYAVHITSFWDEPWCRVCQAVQRAGDRPKSIRNLASWFER.

Disordered stretches follow at residues 1-48 and 66-112; these read MRRL…RAVP and HLGG…STPA. The Cytoplasmic portion of the chain corresponds to 1 to 147; it reads MRRLWGAARK…GGRRGWRRGR (147 aa). The span at 88–106 shows a compositional bias: basic and acidic residues; sequence ASGERQRRLEPQLQHESRC. The helical; Signal-anchor for type II membrane protein transmembrane segment at 148–172 threads the bilayer; the sequence is GLPWTVCVLAAAGLTCTALITYACW. At 173–530 the chain is on the lumenal side; sequence GQLPPLPWAS…IRNLASWFER (358 aa). Residues Asn-216 and Asn-315 are each glycosylated (N-linked (GlcNAc...) asparagine).

The protein belongs to the glycosyltransferase 10 family. In terms of tissue distribution, expressed at low levels in bone marrow-derived mesenchymal stem cells. As to expression, expressed in cord blood immature promyelocytes and in peripheral blood myeloid and lymphoid cell populations.

Its subcellular location is the golgi apparatus. The protein resides in the golgi stack membrane. The enzyme catalyses a beta-D-galactosyl-(1-&gt;4)-N-acetyl-beta-D-glucosaminyl derivative + GDP-beta-L-fucose = a beta-D-galactosyl-(1-&gt;4)-[alpha-L-fucosyl-(1-&gt;3)]-N-acetyl-beta-D-glucosaminyl derivative + GDP + H(+). The catalysed reaction is an N-acetyl-alpha-neuraminyl-(2-&gt;3)-beta-D-galactosyl-(1-&gt;4)-N-acetyl-beta-D-glucosaminyl derivative + GDP-beta-L-fucose = an alpha-Neu5Ac-(2-&gt;3)-beta-D-Gal-(1-&gt;4)-[alpha-L-Fuc-(1-&gt;3)]-beta-D-GlcNAc derivative + GDP + H(+). It carries out the reaction an alpha-Neu5Ac-(2-&gt;3)-beta-D-Gal-(1-&gt;4)-beta-D-GlcNAc-(1-&gt;3)-beta-D-Gal-(1-&gt;4)-beta-D-GlcNAc derivative + GDP-beta-L-fucose = an alpha-Neu5Ac-(2-&gt;3)-beta-D-Gal-(1-&gt;4)-beta-D-GlcNAc-(1-&gt;3)-beta-D-Gal-(1-&gt;4)-[alpha-L-Fuc-(1-&gt;3)]-beta-D-GlcNAc derivative + GDP + H(+). It catalyses the reaction an alpha-Neu5Ac-(2-&gt;3)-beta-D-Gal-(1-&gt;4)-beta-D-GlcNAc6S derivative + GDP-beta-L-fucose = an alpha-Neu5Ac-(2-&gt;3)-beta-D-Gal-(1-&gt;4)-[alpha-L-Fuc-(1-&gt;3)]-beta-D-GlcNAc6S derivative + GDP + H(+). It functions in the pathway protein modification; protein glycosylation. Its function is as follows. Catalyzes alpha(1-&gt;3) linkage of fucosyl moiety transferred from GDP-beta-L-fucose to N-acetyl glucosamine (GlcNAc) within type 2 lactosamine (LacNAc, Gal-beta(1-&gt;4)GlcNAc) glycan attached to N- or O-linked glycoproteins. Robustly fucosylates nonsialylated distal LacNAc unit of the polylactosamine chain to form Lewis X antigen (CD15), a glycan determinant known to mediate important cellular functions in development and immunity. Fucosylates with lower efficiency sialylated LacNAc acceptors to form sialyl Lewis X and 6-sulfo sialyl Lewis X determinants that serve as recognition epitopes for C-type lectins. Together with FUT7 contributes to SELE, SELL and SELP selectin ligand biosynthesis and selectin-dependent lymphocyte homing, leukocyte migration and blood leukocyte homeostasis. In a cell type specific manner, may also fucosylate the internal LacNAc unit of the polylactosamine chain to form VIM-2 antigen that serves as recognition epitope for SELE. In terms of biological role, does not generate Lewis X antigens. In Homo sapiens (Human), this protein is Alpha-(1,3)-fucosyltransferase 4.